We begin with the raw amino-acid sequence, 570 residues long: MSYRMSRAAYANMFGPTVGDKVRLADTELFIEVEKDFTTHGEEVKFGGGKVIRDGMGQSQVTREGGAVDTVITNALILDHWGIVKADIGLKDGRIAAIGKAGNPDMQPGVTIIVGPGTEVIAGEGKIVTAGGMDSHIHFICPQQIEEALMSGLTCMLGGGTGPAHGTLATTCTPGPWHIARMIEAADAFPMNLAFAGKGNASLPGALVEMVLGGATSLKLHEDWGTTPAAIDCCLSVADEYDVQVMIHTDTLNESGFVEDTIAAIKGRTIHAYHTEGAGGGHAPDIIRICGQPNVIPSSTNPTRPYTVNTLAEHLDMLMVCHHLSPTIPEDIAFAESRIRKETIAAEDILHDIGAFSIISSDSQAMGRVGEVAIRTWQTADKMKRQRGRLKEETGDNDNFRVKRYIAKYTINPAIAHGLSHEIGSLEVGKRADLVLWNPAFFGVKPDMVLLGGTIAAAPMGDPNASIPTPQPVHYRPMFGAYGRSRTNSSVTFVSQASLDAGLAGRLGVAKELVAVQNTRGGIGKASMIHNSLTPHIEVDPETYEVRADGELLTCEPATVLPMAQRYFLF.

The Urease domain maps to 131 to 570 (GGMDSHIHFI…LPMAQRYFLF (440 aa)). Ni(2+) contacts are provided by His136, His138, and Lys219. Lys219 bears the N6-carboxylysine mark. His221 is a binding site for substrate. Residues His248 and His274 each coordinate Ni(2+). The active-site Proton donor is the His322. Residue Asp362 coordinates Ni(2+).

Belongs to the metallo-dependent hydrolases superfamily. Urease alpha subunit family. As to quaternary structure, heterotrimer of UreA (gamma), UreB (beta) and UreC (alpha) subunits. Three heterotrimers associate to form the active enzyme. Ni cation serves as cofactor. In terms of processing, carboxylation allows a single lysine to coordinate two nickel ions.

Its subcellular location is the cytoplasm. It catalyses the reaction urea + 2 H2O + H(+) = hydrogencarbonate + 2 NH4(+). Its pathway is nitrogen metabolism; urea degradation; CO(2) and NH(3) from urea (urease route): step 1/1. The protein is Urease subunit alpha of Rhizobium meliloti (strain 1021) (Ensifer meliloti).